Here is a 312-residue protein sequence, read N- to C-terminus: Malate dehydrogenase (312 aa).

Residues 12 to 17 and Asp36 contribute to the NAD(+) site; that span reads GAGFTG. 2 residues coordinate substrate: Arg87 and Arg93. NAD(+)-binding positions include Asn100 and 123–125; that span reads LTN. Asn125 is a binding site for substrate. Ser149 carries the phosphoserine modification. Substrate is bound at residue Arg156. The active-site Proton acceptor is the His180.

It belongs to the LDH/MDH superfamily. MDH type 3 family.

The catalysed reaction is (S)-malate + NAD(+) = oxaloacetate + NADH + H(+). Its function is as follows. Catalyzes the reversible oxidation of malate to oxaloacetate. The polypeptide is Malate dehydrogenase (Bacillus pumilus (strain SAFR-032)).